We begin with the raw amino-acid sequence, 375 residues long: Anhydro-N-acetylmuramic acid kinase (375 aa).

12-19 (GTSLDGVD) is an ATP binding site.

This sequence belongs to the anhydro-N-acetylmuramic acid kinase family.

It catalyses the reaction 1,6-anhydro-N-acetyl-beta-muramate + ATP + H2O = N-acetyl-D-muramate 6-phosphate + ADP + H(+). The protein operates within amino-sugar metabolism; 1,6-anhydro-N-acetylmuramate degradation. It participates in cell wall biogenesis; peptidoglycan recycling. In terms of biological role, catalyzes the specific phosphorylation of 1,6-anhydro-N-acetylmuramic acid (anhMurNAc) with the simultaneous cleavage of the 1,6-anhydro ring, generating MurNAc-6-P. Is required for the utilization of anhMurNAc either imported from the medium or derived from its own cell wall murein, and thus plays a role in cell wall recycling. The protein is Anhydro-N-acetylmuramic acid kinase of Mannheimia succiniciproducens (strain KCTC 0769BP / MBEL55E).